The primary structure comprises 186 residues: MSVADIKKGAEQKMQRSLDAFKNDLSKIRTGRAHTGLLDHIQVDYYGSPVPISQVANLTLVDARTIGVQPWEKKMVAVVEKAIRESDLGLNPASHGDVIRVPMPPLTEERRKELTKVVKSEGETAKVAVRNLRRDANEQLKKLVKDKEISEDDERRAGDDVQKLTDKFVAEIDKLVQTKEGEIMTV.

This sequence belongs to the RRF family.

The protein resides in the cytoplasm. Functionally, responsible for the release of ribosomes from messenger RNA at the termination of protein biosynthesis. May increase the efficiency of translation by recycling ribosomes from one round of translation to another. The protein is Ribosome-recycling factor of Paraburkholderia phymatum (strain DSM 17167 / CIP 108236 / LMG 21445 / STM815) (Burkholderia phymatum).